The sequence spans 291 residues: MPELPEVEVVRRGLERGVVGRTVAEVEVHHLRAVRRHLAGADHFAASLVGQTVATARRRGKYLWLGLTPSEPGGPAVGDALLGHLGMSGQLLVVPADSPDQVHLRVRFRFTDEGRELRFVDQRTFGGLAVVSGGAELPAPIAHIAPDPLSVDFDPERFADALRRRRTGLKRALLDQTLISGVGNIYADEGLWAARLHYARPTETVTRAEALRLLDAVRTVMTAALAAGGTSFDRLYVSTEGVSGLFERSLEVYGRGGQACSRCASTIRRDAFMNRSSFSCPACQPRPRRVR.

The Schiff-base intermediate with DNA role is filled by Pro-2. Glu-3 functions as the Proton donor in the catalytic mechanism. Lys-61 serves as the catalytic Proton donor; for beta-elimination activity. Residues His-103, Arg-123, and Arg-165 each coordinate DNA. The segment at 251–285 (EVYGRGGQACSRCASTIRRDAFMNRSSFSCPACQP) adopts an FPG-type zinc-finger fold. The active-site Proton donor; for delta-elimination activity is Arg-275.

This sequence belongs to the FPG family. In terms of assembly, monomer. Zn(2+) serves as cofactor.

The enzyme catalyses Hydrolysis of DNA containing ring-opened 7-methylguanine residues, releasing 2,6-diamino-4-hydroxy-5-(N-methyl)formamidopyrimidine.. It carries out the reaction 2'-deoxyribonucleotide-(2'-deoxyribose 5'-phosphate)-2'-deoxyribonucleotide-DNA = a 3'-end 2'-deoxyribonucleotide-(2,3-dehydro-2,3-deoxyribose 5'-phosphate)-DNA + a 5'-end 5'-phospho-2'-deoxyribonucleoside-DNA + H(+). Its function is as follows. Involved in base excision repair of DNA damaged by oxidation or by mutagenic agents. Acts as a DNA glycosylase that recognizes and removes damaged bases. Has a preference for oxidized purines, such as 7,8-dihydro-8-oxoguanine (8-oxoG). Has AP (apurinic/apyrimidinic) lyase activity and introduces nicks in the DNA strand. Cleaves the DNA backbone by beta-delta elimination to generate a single-strand break at the site of the removed base with both 3'- and 5'-phosphates. In Parafrankia sp. (strain EAN1pec), this protein is Formamidopyrimidine-DNA glycosylase.